Here is a 643-residue protein sequence, read N- to C-terminus: MLEQIRRPADLQHLSQQQLRDLAAEIRELLVHKVAATGGHLGPNLGVVELTLALHRVFDSPHDPIIFDTGHQAYVHKMLTGRCQDFDSLRKKAGLSGYPSRAESEHDWVESSHASTALSYADGLAKAFELAGNRNRHVVAVVGDGALTGGMCWEALNNIAATPRPVVIVVNDNGRSYAPTIGGVADHLATLRLQPAYERLLEKGRDALHSLPLIGQIAYRFMHSVKAGIKDSLSPQLLFTDLGLKYVGPVDGHDEHAVEVALRKARGFGGPVIVHVVTRKGMGYPPAEADQAEQMHTCGVMDPTTGQPTKIAAPDWTAIFSDALIGYAMKRRDIVAITAAMPGPTGLTAFGQCFPDRLFDVGIAEQHAMTSAAGLAMGRMHPVVAIYSTFLNRAFDQIMMDVALHKLPVTMVIDRAGITGSDGPSHNGMWDLSMLGIVPGMRVAAPRDAIRLREELGEALDVDDGPTAIRFPKGDVCEDIPALKRRSGVDVLAVPATGLAQDVLLVGVGVFASMALAVAKRLHNQGIGVTVIDPRWVLPVCDGVLELAHTHKLIVTLEDNGVNGGVGAAVSTALRQVEIDTPCRDVGLPQEFYDHASRSEVLADLGLTDQDVARRITGWVVAFGHCGSGDDAGQYGPRSSQTM.

Residues His71 and 112-114 (SHA) each bind thiamine diphosphate. Asp144 contacts Mg(2+). Thiamine diphosphate-binding positions include 145–146 (GA), Asn173, Tyr284, and Glu365. A Mg(2+)-binding site is contributed by Asn173.

Belongs to the transketolase family. DXPS subfamily. In terms of assembly, homodimer. Mg(2+) serves as cofactor. Thiamine diphosphate is required as a cofactor.

It catalyses the reaction D-glyceraldehyde 3-phosphate + pyruvate + H(+) = 1-deoxy-D-xylulose 5-phosphate + CO2. The protein operates within metabolic intermediate biosynthesis; 1-deoxy-D-xylulose 5-phosphate biosynthesis; 1-deoxy-D-xylulose 5-phosphate from D-glyceraldehyde 3-phosphate and pyruvate: step 1/1. In terms of biological role, catalyzes the acyloin condensation reaction between C atoms 2 and 3 of pyruvate and glyceraldehyde 3-phosphate to yield 1-deoxy-D-xylulose-5-phosphate (DXP). The chain is 1-deoxy-D-xylulose-5-phosphate synthase from Mycobacterium leprae (strain Br4923).